The sequence spans 1289 residues: uncharacterized protein (1289 aa).

The first 23 residues, 1–23 (MRKYTVIASILLSFLSVLSGGHH), serve as a signal peptide directing secretion. Positions 141-277 (EGYQADLAHI…VVISTNTGKD (137 aa)) constitute an LTD domain.

This is an uncharacterized protein from Bacillus subtilis (strain 168).